The primary structure comprises 390 residues: MQYSRVFLIVMDSVGIGEQPDAPKFNDAGANTLGHIAERVAGFSLPNLQKLGLGNIAPLKNVEPVAAPMAHYGKMQEISMGKDTTTGHWEIMGLHVSTPFNTYPDGFPQELISEFEQRIGRKVLGNKVASGTDILDELGEEHMKTGAVIVYTSADSVFQVAAHEEIVPLEELYHICEVARELTLRDEFAVTRVIARPFLGQPGNFSRTANRHDYSVKPFAPTVMNRLQDAGLSSIAIGKISDIYAEEGVTQSIRTKDNMDGVDQILGTMKQSFTGLSFVNLVDFDAKFGHRRDPEGYGQALMEFDARIPELLEALQENDLLVITADHGNDPVHHGSDHTREYVPLLAYHKGIQAGQHLGIRETFADLGATIADNFGVTAPVIGKSFLNRL.

Asp-12, Asp-285, His-290, Asp-326, His-327, and His-338 together coordinate Mn(2+).

This sequence belongs to the phosphopentomutase family. It depends on Mn(2+) as a cofactor.

Its subcellular location is the cytoplasm. It carries out the reaction 2-deoxy-alpha-D-ribose 1-phosphate = 2-deoxy-D-ribose 5-phosphate. The catalysed reaction is alpha-D-ribose 1-phosphate = D-ribose 5-phosphate. It functions in the pathway carbohydrate degradation; 2-deoxy-D-ribose 1-phosphate degradation; D-glyceraldehyde 3-phosphate and acetaldehyde from 2-deoxy-alpha-D-ribose 1-phosphate: step 1/2. Isomerase that catalyzes the conversion of deoxy-ribose 1-phosphate (dRib-1-P) and ribose 1-phosphate (Rib-1-P) to deoxy-ribose 5-phosphate (dRib-5-P) and ribose 5-phosphate (Rib-5-P), respectively. The polypeptide is Phosphopentomutase (Brevibacillus brevis (strain 47 / JCM 6285 / NBRC 100599)).